The chain runs to 169 residues: Der GTPase-activating protein YihI (169 aa).

2 disordered regions span residues 1–98 and 144–169; these read MKPS…PQAE and GLSYDDDEEEEEDEKQEDMMRLLRGN. The segment covering 10-19 has biased composition (basic residues); that stretch reads SKGHAKARRK. Residues 20–30 are compositionally biased toward basic and acidic residues; that stretch reads TREELDQEARD. Residues 31-40 show a composition bias toward basic residues; the sequence is RKRLKKRRGH. The span at 49–58 shows a compositional bias: polar residues; the sequence is GNTTSGSKGQ. Residues 147–159 show a composition bias toward acidic residues; that stretch reads YDDDEEEEEDEKQ. A compositionally biased stretch (basic and acidic residues) spans 160-169; it reads EDMMRLLRGN.

The protein belongs to the YihI family. As to quaternary structure, interacts with Der.

A GTPase-activating protein (GAP) that modifies Der/EngA GTPase function. May play a role in ribosome biogenesis. The polypeptide is Der GTPase-activating protein YihI (Escherichia coli O6:K15:H31 (strain 536 / UPEC)).